Here is a 66-residue protein sequence, read N- to C-terminus: MPKMKTHKGSAKRFKKTGTGQLKRSHAFTSHLFANKTQKQKRKLRKATLVSKGDFKRIRQLLDNVK.

Over residues M1–K16 the composition is skewed to basic residues. A disordered region spans residues M1–R24.

Belongs to the bacterial ribosomal protein bL35 family.

This Anoxybacillus flavithermus (strain DSM 21510 / WK1) protein is Large ribosomal subunit protein bL35.